Reading from the N-terminus, the 510-residue chain is 2,3-bisphosphoglycerate-independent phosphoglycerate mutase (510 aa).

Asp13 and Ser63 together coordinate Mn(2+). Ser63 acts as the Phosphoserine intermediate in catalysis. Substrate-binding positions include His124, 154–155 (RD), Arg186, Arg192, 262–265 (RADR), and Lys334. Residues Asp401, His405, Asp442, His443, and His461 each coordinate Mn(2+).

It belongs to the BPG-independent phosphoglycerate mutase family. As to quaternary structure, monomer. Mn(2+) serves as cofactor.

It carries out the reaction (2R)-2-phosphoglycerate = (2R)-3-phosphoglycerate. It participates in carbohydrate degradation; glycolysis; pyruvate from D-glyceraldehyde 3-phosphate: step 3/5. Functionally, catalyzes the interconversion of 2-phosphoglycerate and 3-phosphoglycerate. In Aliivibrio fischeri (strain ATCC 700601 / ES114) (Vibrio fischeri), this protein is 2,3-bisphosphoglycerate-independent phosphoglycerate mutase.